Reading from the N-terminus, the 170-residue chain is Calcineurin subunit B type 2 (170 aa).

EF-hand domains lie at 18-46, 50-85, 87-122, and 128-163; these read DEIR…FMSL, QQNP…FSVK, DKLS…MVGN, and QLQQ…TDIH. Ca(2+) is bound by residues Asp31, Asp33, Ser35, Glu42, Asp63, Asp65, Asn67, Glu69, Glu74, Asp100, Asp102, Asp104, Tyr106, Glu111, Asp141, Asp143, Asp145, Lys147, and Glu152. Ser35 is subject to Phosphoserine.

Belongs to the calcineurin regulatory subunit family. Composed of a catalytic subunit (A) and a regulatory subunit (B). Interacts with sra.

Functionally, calcineurin is a calcium-binding and calmodulin-binding protein found in all cells from yeast to mammals, and a calcium-dependent, calmodulin-stimulated protein phosphatase. This chain is Calcineurin subunit B type 2 (CanB2), found in Drosophila melanogaster (Fruit fly).